The primary structure comprises 476 residues: MNILFAVSECVPFVKSGGLADVAGALPKELKKLGVEVRIILPNYSLIPQKLRDGCTLHKVINVPLGWRNQYCGILKGEQDGITYYLIDNEYYFKRDSLYGHYDDGERFSYFSKAVLECIPHLDFEVDVLHSHDWHTAMVNFLLREKYQDNPLYEHIKTVYTIHNLQFQGVFPPEVMYDLLELGDEYFHSEQLEFYGNVNFMKGGIIASDQITAVSPTYKEEIQYEFFGEKLDGLLRKYNDKLSGIVNGIDTSVYNPETDSYITAQYDADSLYEKNENKRALQRYFGLPEKEDTPIISMVTRLTKQKGLDLVRTVFREIMEEDVQCIILGSGDSEYEQFFEWMAYEYPEKVKVYIGFNEELAHQVYAGSDLFLMPSLFEPCGLGQLIALAYGTIPIVRETGGLNDTVQSYDEETGEGNGFSFTNFNAHDMLHTVRRAIEFYHDKPVWEQLVKQAMTEDYSWEKSALAYKKLYKSLME.

An ADP-alpha-D-glucose-binding site is contributed by Lys15.

The protein belongs to the glycosyltransferase 1 family. Bacterial/plant glycogen synthase subfamily.

It carries out the reaction [(1-&gt;4)-alpha-D-glucosyl](n) + ADP-alpha-D-glucose = [(1-&gt;4)-alpha-D-glucosyl](n+1) + ADP + H(+). It participates in glycan biosynthesis; glycogen biosynthesis. Functionally, synthesizes alpha-1,4-glucan chains using ADP-glucose. This chain is Glycogen synthase, found in Bacillus cereus (strain Q1).